Consider the following 153-residue polypeptide: NADPH-dependent 7-cyano-7-deazaguanine reductase (153 aa).

A compositionally biased stretch (polar residues) spans M1–P17. The segment at M1–A23 is disordered. The active-site Thioimide intermediate is C51. The active-site Proton donor is the D58. Residues V73 to S75 and H92 to E93 contribute to the substrate site.

It belongs to the GTP cyclohydrolase I family. QueF type 1 subfamily.

Its subcellular location is the cytoplasm. It catalyses the reaction 7-aminomethyl-7-carbaguanine + 2 NADP(+) = 7-cyano-7-deazaguanine + 2 NADPH + 3 H(+). It functions in the pathway tRNA modification; tRNA-queuosine biosynthesis. In terms of biological role, catalyzes the NADPH-dependent reduction of 7-cyano-7-deazaguanine (preQ0) to 7-aminomethyl-7-deazaguanine (preQ1). The protein is NADPH-dependent 7-cyano-7-deazaguanine reductase of Chelativorans sp. (strain BNC1).